The primary structure comprises 291 residues: tRNA dimethylallyltransferase (291 aa).

9–16 serves as a coordination point for ATP; it reads GTTASGKT. 11 to 16 lines the substrate pocket; it reads TASGKT. The segment at 34 to 37 is interaction with substrate tRNA; it reads DSLC.

The protein belongs to the IPP transferase family. Monomer. Mg(2+) serves as cofactor.

It carries out the reaction adenosine(37) in tRNA + dimethylallyl diphosphate = N(6)-dimethylallyladenosine(37) in tRNA + diphosphate. In terms of biological role, catalyzes the transfer of a dimethylallyl group onto the adenine at position 37 in tRNAs that read codons beginning with uridine, leading to the formation of N6-(dimethylallyl)adenosine (i(6)A). This chain is tRNA dimethylallyltransferase, found in Campylobacter lari (strain RM2100 / D67 / ATCC BAA-1060).